Reading from the N-terminus, the 131-residue chain is Large ribosomal subunit protein bL17 (131 aa).

The protein belongs to the bacterial ribosomal protein bL17 family. Part of the 50S ribosomal subunit. Contacts protein L32.

This Paraburkholderia phymatum (strain DSM 17167 / CIP 108236 / LMG 21445 / STM815) (Burkholderia phymatum) protein is Large ribosomal subunit protein bL17.